The primary structure comprises 118 residues: Small ribosomal subunit protein uS13 (118 aa).

A disordered region spans residues 94–118; the sequence is SLPLRGQRTKTNARTRKGPRKPIKK.

Belongs to the universal ribosomal protein uS13 family. Part of the 30S ribosomal subunit. Forms a loose heterodimer with protein S19. Forms two bridges to the 50S subunit in the 70S ribosome.

Its function is as follows. Located at the top of the head of the 30S subunit, it contacts several helices of the 16S rRNA. In the 70S ribosome it contacts the 23S rRNA (bridge B1a) and protein L5 of the 50S subunit (bridge B1b), connecting the 2 subunits; these bridges are implicated in subunit movement. Contacts the tRNAs in the A and P-sites. The chain is Small ribosomal subunit protein uS13 from Alteromonas mediterranea (strain DSM 17117 / CIP 110805 / LMG 28347 / Deep ecotype).